A 131-amino-acid polypeptide reads, in one-letter code: Methylglyoxal synthase (131 aa).

An MGS-like domain is found at methionine 1–lysine 131. Substrate contacts are provided by residues histidine 8, lysine 12, threonine 34–threonine 37, and serine 54–glycine 55. Residue aspartate 60 is the Proton donor/acceptor of the active site. A substrate-binding site is contributed by histidine 87.

The protein belongs to the methylglyoxal synthase family.

The enzyme catalyses dihydroxyacetone phosphate = methylglyoxal + phosphate. In terms of biological role, catalyzes the formation of methylglyoxal from dihydroxyacetone phosphate. The polypeptide is Methylglyoxal synthase (Bacillus anthracis (strain A0248)).